Consider the following 689-residue polypeptide: Glycine--tRNA ligase beta subunit (689 aa).

This sequence belongs to the class-II aminoacyl-tRNA synthetase family. As to quaternary structure, tetramer of two alpha and two beta subunits.

It localises to the cytoplasm. The catalysed reaction is tRNA(Gly) + glycine + ATP = glycyl-tRNA(Gly) + AMP + diphosphate. The sequence is that of Glycine--tRNA ligase beta subunit from Salmonella schwarzengrund (strain CVM19633).